Consider the following 242-residue polypeptide: Methylthioribulose-1-phosphate dehydratase (242 aa).

Basic and acidic residues predominate over residues 1-11 (MAQEIQKENND). A disordered region spans residues 1-20 (MAQEIQKENNDHLVQSSDPE). A substrate-binding site is contributed by Cys-100. Residues His-117 and His-119 each contribute to the Zn(2+) site. Glu-146 acts as the Proton donor/acceptor in catalysis. His-202 serves as a coordination point for Zn(2+).

This sequence belongs to the aldolase class II family. MtnB subfamily. It depends on Zn(2+) as a cofactor.

Its subcellular location is the cytoplasm. It carries out the reaction 5-(methylsulfanyl)-D-ribulose 1-phosphate = 5-methylsulfanyl-2,3-dioxopentyl phosphate + H2O. The protein operates within amino-acid biosynthesis; L-methionine biosynthesis via salvage pathway; L-methionine from S-methyl-5-thio-alpha-D-ribose 1-phosphate: step 2/6. In terms of biological role, catalyzes the dehydration of methylthioribulose-1-phosphate (MTRu-1-P) into 2,3-diketo-5-methylthiopentyl-1-phosphate (DK-MTP-1-P). This is Methylthioribulose-1-phosphate dehydratase from Aspergillus niger (strain ATCC MYA-4892 / CBS 513.88 / FGSC A1513).